Consider the following 128-residue polypeptide: MSSLQRSAPASQNVSLPLEQVKEALGEVLNALQSPTGSARLEEARENSGNDLGKVLQLLLPAAVQIQQEVLQNYGFSPDGEGVLRFARLVKSYESQDPEIAAMSSKLKSFFLPPLPLPPHAGLSAPSS.

This sequence belongs to the UPF0456 family.

Its subcellular location is the cytoplasm. This Xenopus tropicalis (Western clawed frog) protein is Protein C10.